Reading from the N-terminus, the 350-residue chain is UDP-3-O-acylglucosamine N-acyltransferase (350 aa).

The active-site Proton acceptor is histidine 240.

This sequence belongs to the transferase hexapeptide repeat family. LpxD subfamily. As to quaternary structure, homotrimer.

The catalysed reaction is a UDP-3-O-[(3R)-3-hydroxyacyl]-alpha-D-glucosamine + a (3R)-hydroxyacyl-[ACP] = a UDP-2-N,3-O-bis[(3R)-3-hydroxyacyl]-alpha-D-glucosamine + holo-[ACP] + H(+). The protein operates within bacterial outer membrane biogenesis; LPS lipid A biosynthesis. Functionally, catalyzes the N-acylation of UDP-3-O-acylglucosamine using 3-hydroxyacyl-ACP as the acyl donor. Is involved in the biosynthesis of lipid A, a phosphorylated glycolipid that anchors the lipopolysaccharide to the outer membrane of the cell. This is UDP-3-O-acylglucosamine N-acyltransferase from Methylobacillus flagellatus (strain ATCC 51484 / DSM 6875 / VKM B-1610 / KT).